A 144-amino-acid polypeptide reads, in one-letter code: Protein SprT-like (144 aa).

Positions Asn4–Lys143 constitute a SprT-like domain. His64 contacts Zn(2+). Glu65 is a catalytic residue. His68 provides a ligand contact to Zn(2+).

This sequence belongs to the SprT family. Zn(2+) serves as cofactor.

It localises to the cytoplasm. The chain is Protein SprT-like from Streptococcus suis (strain 98HAH33).